The primary structure comprises 254 residues: Glutamate racemase (254 aa).

Substrate is bound by residues 7–8 (DS) and 39–40 (YG). Cys-70 acts as the Proton donor/acceptor in catalysis. 71-72 (NT) contacts substrate. The active-site Proton donor/acceptor is Cys-178. 179–180 (TH) is a substrate binding site.

The protein belongs to the aspartate/glutamate racemases family.

It carries out the reaction L-glutamate = D-glutamate. It participates in cell wall biogenesis; peptidoglycan biosynthesis. In terms of biological role, provides the (R)-glutamate required for cell wall biosynthesis. This is Glutamate racemase from Aquifex aeolicus (strain VF5).